The following is a 175-amino-acid chain: Sec-independent protein translocase protein TatB (175 aa).

The chain crosses the membrane as a helical span at residues 1–21 (MLDLGLSKMALIGVVALVVLG). The segment covering 99-115 (GDPAAADASGGLGATSD) has biased composition (low complexity). The tract at residues 99 to 118 (GDPAAADASGGLGATSDEPS) is disordered.

The protein belongs to the TatB family. As to quaternary structure, the Tat system comprises two distinct complexes: a TatABC complex, containing multiple copies of TatA, TatB and TatC subunits, and a separate TatA complex, containing only TatA subunits. Substrates initially bind to the TatABC complex, which probably triggers association of the separate TatA complex to form the active translocon.

Its subcellular location is the cell inner membrane. Its function is as follows. Part of the twin-arginine translocation (Tat) system that transports large folded proteins containing a characteristic twin-arginine motif in their signal peptide across membranes. Together with TatC, TatB is part of a receptor directly interacting with Tat signal peptides. TatB may form an oligomeric binding site that transiently accommodates folded Tat precursor proteins before their translocation. The sequence is that of Sec-independent protein translocase protein TatB from Burkholderia thailandensis (strain ATCC 700388 / DSM 13276 / CCUG 48851 / CIP 106301 / E264).